Consider the following 51-residue polypeptide: Protein HokD (51 aa).

The chain crosses the membrane as a helical span at residues 5 to 25 (KAMLIALIVICLTVIVTALVT).

It belongs to the Hok/Gef family.

The protein localises to the cell inner membrane. In terms of biological role, toxic component of a type I toxin-antitoxin (TA) system. When overexpressed kills cells within minutes; causes collapse of the transmembrane potential and arrest of respiration. Its toxic effect is probably neutralized by an antisense antitoxin Sok RNA. The chain is Protein HokD (hokD) from Escherichia coli O157:H7.